The sequence spans 318 residues: Acetyl-coenzyme A carboxylase carboxyl transferase subunit alpha (318 aa).

In terms of domain architecture, CoA carboxyltransferase C-terminal spans 32–293 (NINEEIQRLE…REALREEWAR (262 aa)).

The protein belongs to the AccA family. In terms of assembly, acetyl-CoA carboxylase is a heterohexamer composed of biotin carboxyl carrier protein (AccB), biotin carboxylase (AccC) and two subunits each of ACCase subunit alpha (AccA) and ACCase subunit beta (AccD).

Its subcellular location is the cytoplasm. The enzyme catalyses N(6)-carboxybiotinyl-L-lysyl-[protein] + acetyl-CoA = N(6)-biotinyl-L-lysyl-[protein] + malonyl-CoA. The protein operates within lipid metabolism; malonyl-CoA biosynthesis; malonyl-CoA from acetyl-CoA: step 1/1. In terms of biological role, component of the acetyl coenzyme A carboxylase (ACC) complex. First, biotin carboxylase catalyzes the carboxylation of biotin on its carrier protein (BCCP) and then the CO(2) group is transferred by the carboxyltransferase to acetyl-CoA to form malonyl-CoA. This is Acetyl-coenzyme A carboxylase carboxyl transferase subunit alpha from Halorhodospira halophila (strain DSM 244 / SL1) (Ectothiorhodospira halophila (strain DSM 244 / SL1)).